Here is a 296-residue protein sequence, read N- to C-terminus: NAD kinase (296 aa).

Catalysis depends on D78, which acts as the Proton acceptor. NAD(+) is bound by residues 78–79 (DG), 152–153 (ND), R180, D182, and Q251.

It belongs to the NAD kinase family. The cofactor is a divalent metal cation.

It localises to the cytoplasm. The catalysed reaction is NAD(+) + ATP = ADP + NADP(+) + H(+). Its function is as follows. Involved in the regulation of the intracellular balance of NAD and NADP, and is a key enzyme in the biosynthesis of NADP. Catalyzes specifically the phosphorylation on 2'-hydroxyl of the adenosine moiety of NAD to yield NADP. The sequence is that of NAD kinase from Neisseria meningitidis serogroup C (strain 053442).